The chain runs to 271 residues: Tryptophan synthase alpha chain (271 aa).

Catalysis depends on proton acceptor residues Glu-49 and Asp-60.

This sequence belongs to the TrpA family. Tetramer of two alpha and two beta chains.

The enzyme catalyses (1S,2R)-1-C-(indol-3-yl)glycerol 3-phosphate + L-serine = D-glyceraldehyde 3-phosphate + L-tryptophan + H2O. Its pathway is amino-acid biosynthesis; L-tryptophan biosynthesis; L-tryptophan from chorismate: step 5/5. Its function is as follows. The alpha subunit is responsible for the aldol cleavage of indoleglycerol phosphate to indole and glyceraldehyde 3-phosphate. The protein is Tryptophan synthase alpha chain of Blochmanniella floridana.